Here is a 261-residue protein sequence, read N- to C-terminus: UPF0246 protein azo1887 (261 aa).

This sequence belongs to the UPF0246 family.

This is UPF0246 protein azo1887 from Azoarcus sp. (strain BH72).